A 352-amino-acid chain; its full sequence is Histidinol-phosphate aminotransferase (352 aa).

The residue at position 208 (Lys-208) is an N6-(pyridoxal phosphate)lysine.

The protein belongs to the class-II pyridoxal-phosphate-dependent aminotransferase family. Histidinol-phosphate aminotransferase subfamily. In terms of assembly, homodimer. Pyridoxal 5'-phosphate serves as cofactor.

The catalysed reaction is L-histidinol phosphate + 2-oxoglutarate = 3-(imidazol-4-yl)-2-oxopropyl phosphate + L-glutamate. It functions in the pathway amino-acid biosynthesis; L-histidine biosynthesis; L-histidine from 5-phospho-alpha-D-ribose 1-diphosphate: step 7/9. The chain is Histidinol-phosphate aminotransferase from Streptococcus sanguinis (strain SK36).